Reading from the N-terminus, the 172-residue chain is Large ribosomal subunit protein uL10 (172 aa).

Belongs to the universal ribosomal protein uL10 family. In terms of assembly, part of the ribosomal stalk of the 50S ribosomal subunit. The N-terminus interacts with L11 and the large rRNA to form the base of the stalk. The C-terminus forms an elongated spine to which L12 dimers bind in a sequential fashion forming a multimeric L10(L12)X complex.

Forms part of the ribosomal stalk, playing a central role in the interaction of the ribosome with GTP-bound translation factors. The polypeptide is Large ribosomal subunit protein uL10 (Chlorobium phaeobacteroides (strain DSM 266 / SMG 266 / 2430)).